Here is a 232-residue protein sequence, read N- to C-terminus: Izumo sperm-egg fusion protein 4 (232 aa).

The N-terminal stretch at 1 to 15 is a signal peptide; sequence MALLLCLVCLTAALA. N24 and N219 each carry an N-linked (GlcNAc...) asparagine glycan.

The protein belongs to the Izumo family. As to expression, detected in sperm.

The protein localises to the secreted. The polypeptide is Izumo sperm-egg fusion protein 4 (IZUMO4) (Homo sapiens (Human)).